The sequence spans 248 residues: Cyclin-Q (248 aa).

Methionine 1 bears the N-acetylmethionine mark. Residues 1-12 (MEAPEGGGGGPA) are compositionally biased toward gly residues. The tract at residues 1-21 (MEAPEGGGGGPAARGPEGQPA) is disordered.

It belongs to the cyclin family. Cyclin-like FAM58 subfamily. As to quaternary structure, associates with CDK10 to promote its kinase activity. Interacts with SALL1.

Functionally, activating cyclin for the cyclin-associated kinase CDK10. The chain is Cyclin-Q from Homo sapiens (Human).